Consider the following 126-residue polypeptide: Fluoride-specific ion channel FluC (126 aa).

Transmembrane regions (helical) follow at residues 33–53, 64–84, and 96–116; these read LPLN…VFIV, YSLF…SFAL, and GALA…LIGG. Na(+)-binding residues include G74 and T77.

This sequence belongs to the fluoride channel Fluc/FEX (TC 1.A.43) family.

It is found in the cell membrane. It catalyses the reaction fluoride(in) = fluoride(out). Na(+) is not transported, but it plays an essential structural role and its presence is essential for fluoride channel function. In terms of biological role, fluoride-specific ion channel. Important for reducing fluoride concentration in the cell, thus reducing its toxicity. The sequence is that of Fluoride-specific ion channel FluC from Nitrosopumilus maritimus (strain SCM1).